The following is a 169-amino-acid chain: Positive control factor (169 aa).

Positions 132-157 (YERIADLLGVKKSTVQTTIKRASLKM) form a DNA-binding region, H-T-H motif.

In terms of biological role, positive regulatory protein that acts at the late promoter PL. The chain is Positive control factor (xpf) from Bacillus subtilis (strain 168).